Consider the following 191-residue polypeptide: Calcium and integrin-binding protein 1 (191 aa).

Residue Gly-2 is the site of N-myristoyl glycine attachment. EF-hand domains lie at 103-138 (TPDI…LTGE) and 148-183 (EMKQ…SPDF). Ca(2+)-binding residues include Asp-116, Asp-118, Asp-120, Thr-122, Asp-127, Asp-161, Asp-163, Asp-165, Thr-167, and Glu-172.

Monomer. Interacts with the heterodimeric integrin alpha-IIb/beta3 (ITGA2B-ITGB3). Interacts with ITGA2B (via cytoplasmic domain); the interaction is direct and calcium-dependent. Interacts with the protein kinases PLK2/SNK and PRKDC (via the region immediately upstream of the kinase domain). Interacts with PLK3; the interaction inhibits PLK3 kinase activity. Interacts with PSEN2. Interacts (via C-terminus) with F8. Interacts with NBR1 (via C-terminus). Interacts with FEZ1 (via C-terminus). Interacts with UBR5 (via C-terminus); the interaction is sensitive to DNA damage, and may target CIB1 for ubiquitin-mediated degradation. Interacts with IFI6; the interaction is direct. Interacts with BCL2. Interacts with TAS1R2 (via C-terminus); the interaction is independent of the myristoylation state of CIB1. Interacts with ITPR3; the interaction occurs in a calcium dependent manner. Interacts with PTK2/FAK1. Interacts with MAP3K5; the interaction inhibits MAP3K5 activation by phosphorylation, and its subsequent interaction with TRAF2. Interacts (via C-terminal region) with STMN2 (via the N-terminal region); the interaction is direct, occurs in a calcium-dependent manner and attenuates the STMN2-induced neurite outgrowth inhibition. Interacts with SPHK1, the interaction occurs in a calcium-dependent manner. Interacts with ITGA2B (via C-terminal cytoplasmic tail); the interaction occurs upon platelet aggregation and is stabilized/increased in a calcium and magnesium-dependent manner. Interacts with PAK1 (via N-terminal region); the interaction is direct and occurs in a calcium-dependent manner. Interacts with RAC3 (via C-terminal region); the interaction induces their association with the cytoskeleton upon alpha-IIb/beta3 integrin-mediated adhesion. Interacts with ITGA5 and ITGAV. Interacts with MYO1C. Interacts with ITGA2B (via C-terminal cytoplasmic tail region). Interacts (via C-terminal region) with PPP3R1 isoform 1 and isoform 2; the interactions increase upon cardiomyocytes hypertrophy. Interacts with CACNA1C; the interaction increases upon cardiomyocytes hypertrophy. Interacts and forms a complex with TMC6 and TMC8; the interaction stabilizes each component of the complex. As to expression, expressed strongly in Sertoli cells, weakly in pachytene spermatocytes, round spermatids and condensing spermatids (at protein level). Expressed in testis. Expressed in cardiac myocytes and endothelial cells. Expressed in heart, liver, spleen, lung, kidney, brain and inner ear. In the inner ear, expressed in the vestibule, basilar membrane and spiral ganglion cells.

The protein resides in the membrane. It is found in the cell membrane. The protein localises to the sarcolemma. Its subcellular location is the apical cell membrane. It localises to the cell projection. The protein resides in the ruffle membrane. It is found in the filopodium tip. The protein localises to the growth cone. Its subcellular location is the lamellipodium. It localises to the cytoplasm. The protein resides in the cytoskeleton. It is found in the microtubule organizing center. The protein localises to the centrosome. Its subcellular location is the perinuclear region. It localises to the nucleus. The protein resides in the neuron projection. It is found in the perikaryon. Its function is as follows. Calcium-binding protein that plays a role in the regulation of numerous cellular processes, such as cell differentiation, cell division, cell proliferation, cell migration, thrombosis, angiogenesis, cardiac hypertrophy and apoptosis. Involved in bone marrow megakaryocyte differentiation by negatively regulating thrombopoietin-mediated signaling pathway. Participates in the endomitotic cell cycle of megakaryocyte, a form of mitosis in which both karyokinesis and cytokinesis are interrupted. Plays a role in integrin signaling by negatively regulating alpha-IIb/beta3 activation in thrombin-stimulated megakaryocytes preventing platelet aggregation. Up-regulates PTK2/FAK1 activity, and is also needed for the recruitment of PTK2/FAK1 to focal adhesions; it thus appears to play an important role in focal adhesion formation. Positively regulates cell migration on fibronectin in a CDC42-dependent manner, the effect being negatively regulated by PAK1. Functions as a negative regulator of stress activated MAP kinase (MAPK) signaling pathways. Down-regulates inositol 1,4,5-trisphosphate receptor-dependent calcium signaling. Involved in sphingosine kinase SPHK1 translocation to the plasma membrane in a N-myristoylation-dependent manner preventing TNF-alpha-induced apoptosis. Regulates serine/threonine-protein kinase PLK3 activity for proper completion of cell division progression. Plays a role in microtubule (MT) dynamics during neuronal development; disrupts the MT depolymerization activity of STMN2 attenuating NGF-induced neurite outgrowth and the MT reorganization at the edge of lamellipodia. Promotes cardiomyocyte hypertrophy via activation of the calcineurin/NFAT signaling pathway. Stimulates calcineurin PPP3R1 activity by mediating its anchoring to the sarcolemma. In ischemia-induced (pathological or adaptive) angiogenesis, stimulates endothelial cell proliferation, migration and microvessel formation by activating the PAK1 and ERK1/ERK2 signaling pathway. Also promotes cancer cell survival and proliferation. May regulate cell cycle and differentiation of spermatogenic germ cells, and/or differentiation of supporting Sertoli cells. Forms a complex with TMC6/EVER1 and TMC8/EVER2 in lymphocytes and keratynocytes where CIB1 stabilizes TMC6 and TMC8 levels and reciprocally. The polypeptide is Calcium and integrin-binding protein 1 (Cib1) (Mus musculus (Mouse)).